The chain runs to 4555 residues: Protocadherin Fat 3 (4555 aa).

An N-terminal signal peptide occupies residues 1–31 (MGVTMRHCIDTRPPSCLIFLLLKLCATVSQG). Over 32–4153 (LPGTGPLGFH…AGHSYVGKEE (4122 aa)) the chain is Extracellular. 33 Cadherin domains span residues 43 to 157 (THAL…RPLF), 158 to 265 (SPTT…APII), 263 to 374 (PIIH…TPIK), 376 to 471 (EKDV…TPEF), 472 to 577 (QETL…SPLF), 578 to 680 (EKVA…SKSF), 726 to 830 (KSFP…SPVF), 831 to 935 (LQDS…SPAF), 936 to 1042 (IPSS…TPYF), 1043 to 1147 (PDFA…APLT), 1148 to 1253 (SEPI…KPQF), 1254 to 1358 (PEKV…SPIP), 1362 to 1459 (DEPF…GPEF), 1460 to 1565 (SQPH…SPYF), 1566 to 1768 (TNPL…PPVF), 1769 to 1882 (LFSQ…PPVF), 1883 to 1985 (TQAV…TQSF), 1982 to 2083 (TQSF…SPVF), 2084 to 2185 (VGLP…MPVF), 2186 to 2286 (DKPF…PPVF), 2287 to 2393 (DQPT…PPVF), 2394 to 2495 (NQLI…SPAF), 2496 to 2599 (SQST…APQF), 2600 to 2707 (MTLE…LPSF), 2708 to 2813 (TQSQ…KPVF), 2814 to 2923 (ETSS…APVF), 2924 to 3028 (AHEV…SPVC), 3029 to 3130 (DQVA…PPVF), 3131 to 3235 (SSNH…PPVF), 3236 to 3340 (ERRD…PPRF), 3341 to 3445 (SQDV…SPVF), 3446 to 3550 (TPAN…KPTA), and 3551 to 3652 (IPLE…TIRF). Asn48 carries an N-linked (GlcNAc...) asparagine glycan. Residue Asn341 is glycosylated (N-linked (GlcNAc...) asparagine). Residues Asn481, Asn562, Asn667, Asn799, Asn879, Asn898, and Asn1006 are each glycosylated (N-linked (GlcNAc...) asparagine). N-linked (GlcNAc...) asparagine glycosylation is found at Asn1367 and Asn1429. A glycan (N-linked (GlcNAc...) asparagine) is linked at Asn1751. N-linked (GlcNAc...) asparagine glycosylation is found at Asn1944, Asn1993, and Asn1996. N-linked (GlcNAc...) asparagine glycosylation is found at Asn2208, Asn2292, Asn2331, and Asn2467. Asn2734 is a glycosylation site (N-linked (GlcNAc...) asparagine). Residue Asn3000 is glycosylated (N-linked (GlcNAc...) asparagine). A glycan (N-linked (GlcNAc...) asparagine) is linked at Asn3201. Asn3449, Asn3618, and Asn3741 each carry an N-linked (GlcNAc...) asparagine glycan. The region spanning 3794–3832 (SNDPCVEKPCPEDMQCVGYEASRRPFLCQCPPGKLGECS) is the EGF-like 1 domain. Cystine bridges form between Cys3798–Cys3809, Cys3803–Cys3821, and Cys3823–Cys3831. A Laminin G-like domain is found at 3834–4017 (HTSLSFAGNS…VGLTELKLGC (184 aa)). N-linked (GlcNAc...) asparagine glycosylation is present at Asn3926. Intrachain disulfides connect Cys3984–Cys4017, Cys4024–Cys4035, Cys4029–Cys4045, Cys4047–Cys4056, Cys4063–Cys4074, Cys4068–Cys4083, Cys4085–Cys4094, Cys4101–Cys4112, Cys4106–Cys4121, and Cys4123–Cys4132. EGF-like domains follow at residues 4020 to 4057 (YPDACQRSPCLHGGSCSGLPSGGYQCSCLSQFTGTNCE) and 4059 to 4095 (EITACFPNPCRNGGSCDPIGNTFICSCKAGLTGVTCE). Residues 4097-4133 (DVDECEREECENGGSCVNLFGSFFCNCTPGYVGQYCG) enclose the EGF-like 4; calcium-binding domain. The chain crosses the membrane as a helical span at residues 4154–4174 (LIGIAVVLFVIFTLIVLFIVF). Topologically, residues 4175–4555 (RKKVFRKNYS…FVETQHQTQV (381 aa)) are cytoplasmic. Residues 4326-4343 (SNKGSNSEVQSLNSFQSD) are compositionally biased toward polar residues. 3 disordered regions span residues 4326–4347 (SNKGSNSEVQSLNSFQSDSGDD), 4395–4424 (GGYDIDSEYPPPHEEEFLSQDQLPPPLPED), and 4452–4472 (PRFHPSQYLPPHPLPGETDLG). Residues Arg4508 and Arg4518 each carry the omega-N-methylarginine modification.

Restricted to the nervous system. Abundantly expressed in the fetal brain.

It is found in the membrane. May play a role in the interactions between neurites derived from specific subsets of neurons during development. This is Protocadherin Fat 3 (Fat3) from Rattus norvegicus (Rat).